A 475-amino-acid chain; its full sequence is ISWI one complex protein 4 (475 aa).

Phosphoserine is present on Ser2. The residue at position 9 (Thr9) is a Phosphothreonine. Disordered regions lie at residues 42–84 (VSVH…DFGE), 181–296 (EEEY…IKYH), and 454–475 (EMDR…KVGA). 2 positions are modified to phosphoserine: Ser65 and Ser73. Acidic residues-rich tracts occupy residues 72-84 (QSEE…DFGE), 181-193 (EEEY…EENE), and 241-252 (ASEEEEEEEEEK). Phosphoserine is present on Ser242. Basic residues predominate over residues 259–294 (KRPQRTKTKKVVVSKTKPNPKTKAKKEKPKPPKPIK). A compositionally biased stretch (basic and acidic residues) spans 456 to 475 (DREKPSFSEDVKEEESKVGA).

Component of the ISW1B complex, which at least consists of ISW1, IOC2 and IOC4.

The protein localises to the nucleus. Functions as a component of the ISW1B complex, which acts in remodeling the chromatin by catalyzing an ATP-dependent alteration in the structure of nucleosomal DNA. The ISW1B complex acts within coding regions to control the amount of RNA polymerase II released into productive elongation and to coordinate elongation with termination and pre-mRNA processing. The polypeptide is ISWI one complex protein 4 (IOC4) (Saccharomyces cerevisiae (strain ATCC 204508 / S288c) (Baker's yeast)).